A 657-amino-acid polypeptide reads, in one-letter code: MGSDRSALGRPGCTGSCLSSRASLLPLLLVLLDCLGHGTASKDAEVYAAENWLRLYGYLPQPSRHMSTMRSAQILASALAEMQSFYGIPVTGVLDEETKTWMKRPRCGVPDQFGVHVKANLRRRRKRYTLTGKAWNNYHLTFSIQNYTEKLGWYNSMEAVRRAFQVWEQVTPLVFQEVSYDDIRLRRRAEADIMVLFASGFHGDSSPFDGVGGFLAHAYFPGPGLGGDTHFDADEPWTFSSTDLHGISLFLVAVHELGHALGLEHSSNPSAIMAPFYQWMDTDNFQLPEDDLRGIQQLYGSPDGKPQPTRPLPTVRPRRPGRPDHQPPRPPQPPHPGGKPERPPKPGPPPQPRATERPDQYGPNICDGNFDTVAVLRGEMFVFKGRWFWRVRHNRVLDNYPMPIGHFWRGLPGNISAAYERQDGHFVFFKGNRYWLFREANLEPGYPQPLSSYGTDIPYDRIDTAIWWEPTGHTFFFQADRYWRFNEETQHGDPGYPKPISVWQGIPTSPKGAFLSNDAAYTYFYKGTKYWKFNNERLRMEPGHPKSILRDFMGCQEHVEPRSRWPDVARPPFNPNGGAEPEADGDSKEENAGDKDEGSRVVVQMEEVVRTVNVVMVLVPLLLLLCILGLAFALVQMQRKGAPRMLLYCKRSLQEWV.

An N-terminal signal peptide occupies residues 1–36 (MGSDRSALGRPGCTGSCLSSRASLLPLLLVLLDCLG). A propeptide spanning residues 37 to 127 (HGTASKDAEV…KANLRRRRKR (91 aa)) is cleaved from the precursor. Residues 105-112 (PRCGVPDQ) carry the Cysteine switch motif. A Zn(2+)-binding site is contributed by C107. Residues 128–614 (YTLTGKAWNN…MEEVVRTVNV (487 aa)) are Extracellular-facing. N146 carries an N-linked (GlcNAc...) asparagine glycan. Position 255 (H255) interacts with Zn(2+). The active site involves E256. Residues H259 and H265 each contribute to the Zn(2+) site. A disordered region spans residues 295–365 (IQQLYGSPDG…ERPDQYGPNI (71 aa)). Residues 328–337 (PRPPQPPHPG) are compositionally biased toward pro residues. Hemopexin repeat units follow at residues 363–411 (PNIC…WRGL), 412–457 (PGNI…GTDI), 459–507 (YDRI…QGIP), and 508–555 (TSPK…FMGC). A disulfide bridge links C366 with C555. N-linked (GlcNAc...) asparagine glycosylation occurs at N414. A disordered region spans residues 561–599 (PRSRWPDVARPPFNPNGGAEPEADGDSKEENAGDKDEGS). Positions 585–599 (GDSKEENAGDKDEGS) are enriched in basic and acidic residues. A helical transmembrane segment spans residues 615-635 (VMVLVPLLLLLCILGLAFALV). The Cytoplasmic segment spans residues 636–657 (QMQRKGAPRMLLYCKRSLQEWV).

It belongs to the peptidase M10A family. Zn(2+) serves as cofactor. Ca(2+) is required as a cofactor. In terms of processing, the precursor is cleaved by a furin endopeptidase.

The protein resides in the membrane. Functionally, endopeptidase that degrades various components of the extracellular matrix. May activate progelatinase A. The protein is Matrix metalloproteinase-15 (Mmp15) of Mus musculus (Mouse).